Reading from the N-terminus, the 157-residue chain is UPF0756 membrane protein BH3161 (157 aa).

The next 4 membrane-spanning stretches (helical) occupy residues 1-21, 54-74, 87-107, and 117-137; these read MISQ…LAKN, LGVT…EIGF, WVAL…IDLL, and LVLG…GPLI.

This sequence belongs to the UPF0756 family.

It is found in the cell membrane. In Halalkalibacterium halodurans (strain ATCC BAA-125 / DSM 18197 / FERM 7344 / JCM 9153 / C-125) (Bacillus halodurans), this protein is UPF0756 membrane protein BH3161.